Here is a 573-residue protein sequence, read N- to C-terminus: Proline--tRNA ligase (573 aa).

This sequence belongs to the class-II aminoacyl-tRNA synthetase family. ProS type 1 subfamily. As to quaternary structure, homodimer.

It localises to the cytoplasm. It catalyses the reaction tRNA(Pro) + L-proline + ATP = L-prolyl-tRNA(Pro) + AMP + diphosphate. Catalyzes the attachment of proline to tRNA(Pro) in a two-step reaction: proline is first activated by ATP to form Pro-AMP and then transferred to the acceptor end of tRNA(Pro). As ProRS can inadvertently accommodate and process non-cognate amino acids such as alanine and cysteine, to avoid such errors it has two additional distinct editing activities against alanine. One activity is designated as 'pretransfer' editing and involves the tRNA(Pro)-independent hydrolysis of activated Ala-AMP. The other activity is designated 'posttransfer' editing and involves deacylation of mischarged Ala-tRNA(Pro). The misacylated Cys-tRNA(Pro) is not edited by ProRS. This chain is Proline--tRNA ligase, found in Caldanaerobacter subterraneus subsp. tengcongensis (strain DSM 15242 / JCM 11007 / NBRC 100824 / MB4) (Thermoanaerobacter tengcongensis).